The sequence spans 392 residues: 8-amino-7-oxononanoate synthase (392 aa).

R19 serves as a coordination point for substrate. 106-107 (GY) serves as a coordination point for pyridoxal 5'-phosphate. H131 is a binding site for substrate. Pyridoxal 5'-phosphate-binding residues include S176, H204, and T233. An N6-(pyridoxal phosphate)lysine modification is found at K236. Position 350 (T350) interacts with substrate.

This sequence belongs to the class-II pyridoxal-phosphate-dependent aminotransferase family. BioF subfamily. Homodimer. Requires pyridoxal 5'-phosphate as cofactor.

It carries out the reaction 6-carboxyhexanoyl-[ACP] + L-alanine + H(+) = (8S)-8-amino-7-oxononanoate + holo-[ACP] + CO2. It participates in cofactor biosynthesis; biotin biosynthesis. In terms of biological role, catalyzes the decarboxylative condensation of pimeloyl-[acyl-carrier protein] and L-alanine to produce 8-amino-7-oxononanoate (AON), [acyl-carrier protein], and carbon dioxide. The polypeptide is 8-amino-7-oxononanoate synthase (Stutzerimonas stutzeri (strain A1501) (Pseudomonas stutzeri)).